Reading from the N-terminus, the 282-residue chain is 4-deoxy-L-threo-5-hexosulose-uronate ketol-isomerase 2 (282 aa).

Histidine 200, histidine 202, glutamate 207, and histidine 249 together coordinate Zn(2+).

The protein belongs to the KduI family. Requires Zn(2+) as cofactor.

It catalyses the reaction 5-dehydro-4-deoxy-D-glucuronate = 3-deoxy-D-glycero-2,5-hexodiulosonate. The protein operates within glycan metabolism; pectin degradation; 2-dehydro-3-deoxy-D-gluconate from pectin: step 4/5. Functionally, catalyzes the isomerization of 5-dehydro-4-deoxy-D-glucuronate to 3-deoxy-D-glycero-2,5-hexodiulosonate. This is 4-deoxy-L-threo-5-hexosulose-uronate ketol-isomerase 2 (kduI2) from Rhizobium meliloti (strain 1021) (Ensifer meliloti).